The following is a 161-amino-acid chain: MTSIRIGNGYDIHRLVSDRPLILGGVNIPHELGLLGHSDADVLTHAIMDALLGALSLGDIGHYFPPGDPQWAGADSLKLLAQVHQLVQERGWQVGNIDSVIVAERPKLKPHLAAMRDRLSAVLKVKPDQIGIKATTNEKLGPEGREEGICAYAVAVLVSVA.

A divalent metal cation-binding residues include aspartate 11 and histidine 13. 4-CDP-2-C-methyl-D-erythritol 2-phosphate contacts are provided by residues 11–13 and 37–38; these read DIH and HS. Histidine 45 contacts a divalent metal cation. 4-CDP-2-C-methyl-D-erythritol 2-phosphate-binding positions include 59–61, 135–138, and arginine 145; these read DIG and TTNE.

Belongs to the IspF family. Homotrimer. The cofactor is a divalent metal cation.

It catalyses the reaction 4-CDP-2-C-methyl-D-erythritol 2-phosphate = 2-C-methyl-D-erythritol 2,4-cyclic diphosphate + CMP. It participates in isoprenoid biosynthesis; isopentenyl diphosphate biosynthesis via DXP pathway; isopentenyl diphosphate from 1-deoxy-D-xylulose 5-phosphate: step 4/6. Involved in the biosynthesis of isopentenyl diphosphate (IPP) and dimethylallyl diphosphate (DMAPP), two major building blocks of isoprenoid compounds. Catalyzes the conversion of 4-diphosphocytidyl-2-C-methyl-D-erythritol 2-phosphate (CDP-ME2P) to 2-C-methyl-D-erythritol 2,4-cyclodiphosphate (ME-CPP) with a corresponding release of cytidine 5-monophosphate (CMP). This Cyanothece sp. (strain PCC 7425 / ATCC 29141) protein is 2-C-methyl-D-erythritol 2,4-cyclodiphosphate synthase.